We begin with the raw amino-acid sequence, 236 residues long: Ubiquinone biosynthesis O-methyltransferase (236 aa).

4 residues coordinate S-adenosyl-L-methionine: Arg36, Gly60, Asp81, and Leu123.

This sequence belongs to the methyltransferase superfamily. UbiG/COQ3 family.

The enzyme catalyses a 3-demethylubiquinol + S-adenosyl-L-methionine = a ubiquinol + S-adenosyl-L-homocysteine + H(+). It carries out the reaction a 3-(all-trans-polyprenyl)benzene-1,2-diol + S-adenosyl-L-methionine = a 2-methoxy-6-(all-trans-polyprenyl)phenol + S-adenosyl-L-homocysteine + H(+). It functions in the pathway cofactor biosynthesis; ubiquinone biosynthesis. In terms of biological role, O-methyltransferase that catalyzes the 2 O-methylation steps in the ubiquinone biosynthetic pathway. The chain is Ubiquinone biosynthesis O-methyltransferase from Rickettsia canadensis (strain McKiel).